The following is a 1059-amino-acid chain: Disks large-associated protein 2 (1059 aa).

2 disordered regions span residues 31–54 and 245–311; these read GEPE…PAEE and KSHS…SDST. A compositionally biased stretch (polar residues) spans 245 to 261; sequence KSHSLEGSSKSNINGTK. Residues 262-271 are compositionally biased toward basic and acidic residues; the sequence is SDSRVDDHHQ. Over residues 272–285 the composition is skewed to basic residues; sequence SHLSKHSKRSKSKE. Residues Ser-302, Ser-308, Ser-390, and Ser-456 each carry the phosphoserine modification. A disordered region spans residues 613 to 669; sequence YKKTPPPVPPRTTSKPLISVTAQSSTESTQDAYQDSRAQRMSPWPQDSRGGLYNSMD. A compositionally biased stretch (polar residues) spans 632–645; the sequence is VTAQSSTESTQDAY. Residues Ser-667, Ser-670, Ser-673, and Ser-720 each carry the phosphoserine modification. The tract at residues 723–756 is disordered; sequence VQDSEFPDHQPYPRSDVETATDSDTESRGLREYH. The residue at position 743 (Thr-743) is a Phosphothreonine. At Ser-745 the chain carries Phosphoserine. The span at 747–756 shows a compositional bias: basic and acidic residues; the sequence is TESRGLREYH. Ser-776, Ser-811, Ser-983, and Ser-1012 each carry phosphoserine. Residues 985–1025 are disordered; the sequence is ERKEERKIPPPIPKKPPKGKFPITREKSLDLPDRQRQEARR. The segment covering 1007-1025 has biased composition (basic and acidic residues); sequence ITREKSLDLPDRQRQEARR.

It belongs to the SAPAP family. Interacts with DLG4/PSD-95. In terms of tissue distribution, expressed in various brain areas.

It is found in the cell membrane. Its subcellular location is the postsynaptic density. The protein resides in the synapse. In terms of biological role, may play a role in the molecular organization of synapses and neuronal cell signaling. Could be an adapter protein linking ion channel to the subsynaptic cytoskeleton. May induce enrichment of PSD-95/SAP90 at the plasma membrane. This is Disks large-associated protein 2 from Mus musculus (Mouse).